Consider the following 1131-residue polypeptide: DNA polymerase II large subunit (1131 aa).

It belongs to the archaeal DNA polymerase II family. Heterodimer of a large subunit and a small subunit.

The catalysed reaction is DNA(n) + a 2'-deoxyribonucleoside 5'-triphosphate = DNA(n+1) + diphosphate. It catalyses the reaction Exonucleolytic cleavage in the 3'- to 5'-direction to yield nucleoside 5'-phosphates.. Its function is as follows. Possesses two activities: a DNA synthesis (polymerase) and an exonucleolytic activity that degrades single-stranded DNA in the 3'- to 5'-direction. Has a template-primer preference which is characteristic of a replicative DNA polymerase. The sequence is that of DNA polymerase II large subunit from Methanococcus maripaludis (strain DSM 14266 / JCM 13030 / NBRC 101832 / S2 / LL).